The following is a 156-amino-acid chain: Phosphopantetheine adenylyltransferase (156 aa).

This sequence belongs to the eukaryotic CoaD family.

Its subcellular location is the cytoplasm. The enzyme catalyses (R)-4'-phosphopantetheine + ATP + H(+) = 3'-dephospho-CoA + diphosphate. Its pathway is cofactor biosynthesis; coenzyme A biosynthesis. Reversibly transfers an adenylyl group from ATP to 4'-phosphopantetheine, yielding dephospho-CoA (dPCoA) and pyrophosphate. This chain is Phosphopantetheine adenylyltransferase, found in Methanosarcina acetivorans (strain ATCC 35395 / DSM 2834 / JCM 12185 / C2A).